The sequence spans 178 residues: GPI mannosyltransferase 2 subunit C167.09 (178 aa).

An N-terminal signal peptide occupies residues 1 to 20 (MREFRLIFVLLFFLPSFAIA). The Lumenal segment spans residues 21–152 (NTEIINVETG…LGFLPKSVLP (132 aa)). N-linked (GlcNAc...) asparagine glycosylation is found at asparagine 48, asparagine 49, asparagine 106, asparagine 115, and asparagine 122. A helical membrane pass occupies residues 153-173 (IVGFVFVIILIALICMTNLFI). Residues 174-178 (KHKRD) are Cytoplasmic-facing.

As to quaternary structure, part of the GPI mannosyltransferase 2 complex composed of gpi18 and C167.09.

Its subcellular location is the endoplasmic reticulum membrane. It participates in glycolipid biosynthesis; glycosylphosphatidylinositol-anchor biosynthesis. In terms of biological role, essential component of the GPI mannosyltransferase 2 complex. Responsible for the transfer of the second mannose to the glycosylphosphatidylinositol during GPI precursor assembly. The sequence is that of GPI mannosyltransferase 2 subunit C167.09 from Schizosaccharomyces pombe (strain 972 / ATCC 24843) (Fission yeast).